We begin with the raw amino-acid sequence, 504 residues long: Glycerol kinase (504 aa).

An ADP-binding site is contributed by threonine 12. ATP contacts are provided by threonine 12, threonine 13, and serine 14. Threonine 12 provides a ligand contact to sn-glycerol 3-phosphate. Arginine 16 contacts ADP. Sn-glycerol 3-phosphate-binding residues include arginine 82, glutamate 83, tyrosine 134, and aspartate 244. Residues arginine 82, glutamate 83, tyrosine 134, aspartate 244, and glutamine 245 each coordinate glycerol. Threonine 266 and glycine 309 together coordinate ADP. ATP-binding residues include threonine 266, glycine 309, glutamine 313, and glycine 410. The ADP site is built by glycine 410 and asparagine 414.

The protein belongs to the FGGY kinase family. As to quaternary structure, homotetramer and homodimer (in equilibrium).

The enzyme catalyses glycerol + ATP = sn-glycerol 3-phosphate + ADP + H(+). It functions in the pathway polyol metabolism; glycerol degradation via glycerol kinase pathway; sn-glycerol 3-phosphate from glycerol: step 1/1. Its activity is regulated as follows. Activated by phosphorylation and inhibited by fructose 1,6-bisphosphate (FBP). Key enzyme in the regulation of glycerol uptake and metabolism. Catalyzes the phosphorylation of glycerol to yield sn-glycerol 3-phosphate. The chain is Glycerol kinase from Alkaliphilus oremlandii (strain OhILAs) (Clostridium oremlandii (strain OhILAs)).